The chain runs to 152 residues: Large ribosomal subunit protein bL9 (152 aa).

This sequence belongs to the bacterial ribosomal protein bL9 family.

Functionally, binds to the 23S rRNA. This Synechococcus sp. (strain WH7803) protein is Large ribosomal subunit protein bL9.